A 142-amino-acid polypeptide reads, in one-letter code: Large ribosomal subunit protein uL11 (142 aa).

The protein belongs to the universal ribosomal protein uL11 family. Part of the ribosomal stalk of the 50S ribosomal subunit. Interacts with L10 and the large rRNA to form the base of the stalk. L10 forms an elongated spine to which L12 dimers bind in a sequential fashion forming a multimeric L10(L12)X complex. In terms of processing, one or more lysine residues are methylated.

In terms of biological role, forms part of the ribosomal stalk which helps the ribosome interact with GTP-bound translation factors. The protein is Large ribosomal subunit protein uL11 of Desulforudis audaxviator (strain MP104C).